Here is a 240-residue protein sequence, read N- to C-terminus: 4-hydroxy-tetrahydrodipicolinate reductase (240 aa).

Residue 7-12 (GLSGTM) coordinates NAD(+). Lys35 contacts NADP(+). NAD(+)-binding positions include 74 to 76 (GTT) and 98 to 101 (ATNM). The Proton donor/acceptor role is filled by His131. (S)-2,3,4,5-tetrahydrodipicolinate is bound at residue His132. The active-site Proton donor is Lys135. 141-142 (GS) contributes to the (S)-2,3,4,5-tetrahydrodipicolinate binding site.

The protein belongs to the DapB family.

It is found in the cytoplasm. It carries out the reaction (S)-2,3,4,5-tetrahydrodipicolinate + NAD(+) + H2O = (2S,4S)-4-hydroxy-2,3,4,5-tetrahydrodipicolinate + NADH + H(+). The enzyme catalyses (S)-2,3,4,5-tetrahydrodipicolinate + NADP(+) + H2O = (2S,4S)-4-hydroxy-2,3,4,5-tetrahydrodipicolinate + NADPH + H(+). The protein operates within amino-acid biosynthesis; L-lysine biosynthesis via DAP pathway; (S)-tetrahydrodipicolinate from L-aspartate: step 4/4. Its function is as follows. Catalyzes the conversion of 4-hydroxy-tetrahydrodipicolinate (HTPA) to tetrahydrodipicolinate. This is 4-hydroxy-tetrahydrodipicolinate reductase from Alkaliphilus metalliredigens (strain QYMF).